The primary structure comprises 303 residues: Succinate--CoA ligase [ADP-forming] subunit alpha (303 aa).

Residues 20 to 23 (TGSE), Lys-46, and 108 to 110 (ITE) contribute to the CoA site. A substrate-binding site is contributed by Tyr-173. His-259 acts as the Tele-phosphohistidine intermediate in catalysis.

This sequence belongs to the succinate/malate CoA ligase alpha subunit family. As to quaternary structure, heterotetramer of two alpha and two beta subunits.

The catalysed reaction is succinate + ATP + CoA = succinyl-CoA + ADP + phosphate. It carries out the reaction GTP + succinate + CoA = succinyl-CoA + GDP + phosphate. The protein operates within carbohydrate metabolism; tricarboxylic acid cycle; succinate from succinyl-CoA (ligase route): step 1/1. In terms of biological role, succinyl-CoA synthetase functions in the citric acid cycle (TCA), coupling the hydrolysis of succinyl-CoA to the synthesis of either ATP or GTP and thus represents the only step of substrate-level phosphorylation in the TCA. The alpha subunit of the enzyme binds the substrates coenzyme A and phosphate, while succinate binding and nucleotide specificity is provided by the beta subunit. The protein is Succinate--CoA ligase [ADP-forming] subunit alpha of Mycobacterium bovis (strain ATCC BAA-935 / AF2122/97).